Consider the following 486-residue polypeptide: Membrane-bound lytic murein transglycosylase F (486 aa).

A signal peptide spans 1–21 (MKRLKINYILIGVVTLLLALA). A non-LT domain region spans residues 22-268 (LWPNITWRGG…RLEEKYLGHV (247 aa)). The tract at residues 269–486 (GSFDYVDTKT…AVTPELALNF (218 aa)) is LT domain. Glu313 is an active-site residue.

The protein in the N-terminal section; belongs to the bacterial solute-binding protein 3 family. It in the C-terminal section; belongs to the transglycosylase Slt family.

It is found in the cell outer membrane. It catalyses the reaction Exolytic cleavage of the (1-&gt;4)-beta-glycosidic linkage between N-acetylmuramic acid (MurNAc) and N-acetylglucosamine (GlcNAc) residues in peptidoglycan, from either the reducing or the non-reducing ends of the peptidoglycan chains, with concomitant formation of a 1,6-anhydrobond in the MurNAc residue.. In terms of biological role, murein-degrading enzyme that degrades murein glycan strands and insoluble, high-molecular weight murein sacculi, with the concomitant formation of a 1,6-anhydromuramoyl product. Lytic transglycosylases (LTs) play an integral role in the metabolism of the peptidoglycan (PG) sacculus. Their lytic action creates space within the PG sacculus to allow for its expansion as well as for the insertion of various structures such as secretion systems and flagella. This is Membrane-bound lytic murein transglycosylase F from Serratia proteamaculans (strain 568).